The primary structure comprises 114 residues: uncharacterized protein (114 aa).

Its subcellular location is the mitochondrion. This is an uncharacterized protein from Arabidopsis thaliana (Mouse-ear cress).